Here is a 391-residue protein sequence, read N- to C-terminus: MSVLPGAAAIAGIGATEFSKNSGRSELQLACEAVLAAIADAGLEPSDVDGLVTFTADTSSEIHVARNTGIGELKFFSRVGYGGGAACGTVQQAAMAVATGIAEVVVCYRAFNERSGVRYGLGQAGRQMDQGADSAAYAWLLPFGLNTPAQWVAMFARRYMHEYGATSEDFGRVAVVDRKHAATNPKAWFYQRPITLEDHQNSRWIVEPLHLLDCCQESDGGQALVVVSTERARDLPHPPALIWGAAQGSGYDQHMMTSYYRSEITGIPEMGLVGQQLYAQSGLNPSDIGAAILYDHFTPLVLPQLEELGFCARGEAKDFIADGNLEIGGRLPCNTHGGQLGEAYIHGMNGIAEAVRLVRGTSVNQPGDVTNVLVTAGTGVPTSGLILGADR.

Tyr294 functions as the Proton acceptor in the catalytic mechanism. Tyr344 acts as the Proton donor in catalysis.

The protein belongs to the thiolase-like superfamily. Homodimer. Interacts with the ChsH1/ChsH2 hydratase via the DUF35 C-terminal region of ChsH2 (ChsH2-DUF35).

The catalysed reaction is 17-hydroxy-3-oxochol-4-en-22-oyl-CoA = androst-4-ene-3,17-dione + propanoyl-CoA. Functionally, probably involved in bile acid degradation. In vitro, when associated with the ChsH1/ChsH2 hydratase, catalyzes the retroaldol cleavage of 17-hydroxy-3-oxo-4-pregnene-20-carboxyl-CoA (17-HOPC-CoA), forming androst-4-ene-3,17-dione and propionyl-CoA. The in vivo substrate is probably a closely analogous bile acid degradation metabolite. The protein is Steroid side-chain-cleaving aldolase of Thermomonospora curvata (strain ATCC 19995 / DSM 43183 / JCM 3096 / KCTC 9072 / NBRC 15933 / NCIMB 10081 / Henssen B9).